We begin with the raw amino-acid sequence, 357 residues long: Uroporphyrinogen decarboxylase (357 aa).

Residues 27–31, Asp77, Tyr154, Ser209, and His330 each bind substrate; that span reads RQAGR.

The protein belongs to the uroporphyrinogen decarboxylase family. Homodimer.

It is found in the cytoplasm. It catalyses the reaction uroporphyrinogen III + 4 H(+) = coproporphyrinogen III + 4 CO2. The protein operates within porphyrin-containing compound metabolism; protoporphyrin-IX biosynthesis; coproporphyrinogen-III from 5-aminolevulinate: step 4/4. In terms of biological role, catalyzes the decarboxylation of four acetate groups of uroporphyrinogen-III to yield coproporphyrinogen-III. This chain is Uroporphyrinogen decarboxylase, found in Acinetobacter baumannii (strain ACICU).